The sequence spans 566 residues: Oxygen-dependent choline dehydrogenase (566 aa).

Residue 7 to 36 participates in FAD binding; sequence DYIICGAGSAGNVLATRLTEDPNVTVLLLE. The tract at residues 182–204 is disordered; the sequence is YQQEGFGPMDRTVTPKGRRASTA. H474 acts as the Proton acceptor in catalysis.

This sequence belongs to the GMC oxidoreductase family. FAD serves as cofactor.

The catalysed reaction is choline + A = betaine aldehyde + AH2. The enzyme catalyses betaine aldehyde + NAD(+) + H2O = glycine betaine + NADH + 2 H(+). Its pathway is amine and polyamine biosynthesis; betaine biosynthesis via choline pathway; betaine aldehyde from choline (cytochrome c reductase route): step 1/1. Functionally, involved in the biosynthesis of the osmoprotectant glycine betaine. Catalyzes the oxidation of choline to betaine aldehyde and betaine aldehyde to glycine betaine at the same rate. This Burkholderia multivorans (strain ATCC 17616 / 249) protein is Oxygen-dependent choline dehydrogenase.